Here is a 1235-residue protein sequence, read N- to C-terminus: MMQIPKPKDSIWTDDQWSAIVSSGRDILVAAAAGSGKTAVLVERMIRKITAEEDPVDVDRLLVVTFTNASAAEMKHRIAEALEKELAKNPGSLHIRRQLSLLNRASISTLHSFCLQVLKKYYYMIDLDPGFRMADQTEGELLGDEVLDELFEDEYAKGNQAFFELADRYTTDRHDLDLQDLVKRVYEYSRSHPDPEVWLQSFVRLYDVTEESKMEELPFYQYVKEDAEMALFGAKQKLEKALELTKAPGGPAPRADNFLDDLQQIEELISCRHDFDALYERVPAVSFKRAKAVKGDEFDKALLDEATDLRNGAKKLIEKVKTDYFTRSPQDHLKSLADMKPVIETLVQLVISYGKRFEAAKQEKSIIDFSDLEHYCLAILTAVDEEGRRVPSEAAVYYQDQFHEVLVDEYQDTNLVQESILQLVKSGNEEAGNLFMVGDVKQSIYRFRLAEPLLFLGKYKRFTESGAGAGQKIDLNQNFRSRSDILDSTNFLFKQLMGGKIGEVDYDEQAALKLGASYPPNDAAKTELLLIDSADGADSSEDAEDFETVHWEAKAIAGEIRKLVSSPFKVYDGKTKTHRNIQYRDIVILLRSMPWAPQLMEELKNQGIPVYANLTSGYFEAVEVAAALSVLKVIDNPYQDIPLASVLRSPIVGCDENELALIRLEKKKAPFYEALKAYLANADRHDELYQKLRTFYDSLQKWRSFSTNHSVSELIWEVYRDTGYFDYAGGMPGGKQRQANLRVLYDRARSYEATAFRGLFRFLRFIERMQERGDDLGTARALSEQEDVVRLMTIHSSKGLEFPVVFTAGLGRSFNMMDLNKSYLLDKELGFGTKYIHPELRISYPTLPLVAMKKKMRRELLSEELRVLYVALTRAKEKLFLVGSCKNREKQLAKWQAQADRADWLLSEFDRYQASSYLDFIGPALIRHRDMEAHRTPGLSSSEDIARDPSRFHIRMLQQSELLEENPKERAEEKSKRLKAIQQGEPIPDSFSFDDQARRLLEWEYPYRELTAIRTKQSVSELKRKQEYEDEYSGRSLIKPSGDTLLYRRPGFMMKKGLTAAEKGTAMHTVMQHIPLTHVPTAEEAERTVRMLYEKELLTEEQQEAIDIEEIVQFFGTEIGKDLLRALRIDREVPFSMALPAGEVYKDAETAGEPLLVQGIIDCLYETADGLYLLDYKTDRIEGKFRNGFEGAAPILQKRYETQIELYTKAVEQITKTKVKGRALYFFDGGHVLTL.

Positions 10 to 482 (SIWTDDQWSA…IDLNQNFRSR (473 aa)) constitute a UvrD-like helicase ATP-binding domain. 31-38 (AAAGSGKT) is a binding site for ATP. In terms of domain architecture, UvrD-like helicase C-terminal spans 509–799 (QAALKLGASY…RLMTIHSSKG (291 aa)).

It belongs to the helicase family. AddA subfamily. In terms of assembly, heterodimer of AddA and AddB/RexB. The cofactor is Mg(2+).

The catalysed reaction is Couples ATP hydrolysis with the unwinding of duplex DNA by translocating in the 3'-5' direction.. It catalyses the reaction ATP + H2O = ADP + phosphate + H(+). Its function is as follows. The heterodimer acts as both an ATP-dependent DNA helicase and an ATP-dependent, dual-direction single-stranded exonuclease. Recognizes the chi site generating a DNA molecule suitable for the initiation of homologous recombination. The AddA nuclease domain is required for chi fragment generation; this subunit has the helicase and 3' -&gt; 5' nuclease activities. The protein is ATP-dependent helicase/nuclease subunit A of Bacillus velezensis (strain DSM 23117 / BGSC 10A6 / LMG 26770 / FZB42) (Bacillus amyloliquefaciens subsp. plantarum).